The sequence spans 528 residues: DnaJ homolog 1, mitochondrial (528 aa).

Residues 1-66 (MFSKYLQSRV…REFSRCAALK (66 aa)) constitute a mitochondrion transit peptide. Residues 86 to 150 (DPYKTLGVSK…KKKKAFDTYG (65 aa)) enclose the J domain. A CR-type zinc finger spans residues 227 to 308 (GAKKDLSYSV…CMGSGTVRER (82 aa)). CXXCXGXG motif repeat units follow at residues 240–247 (CSSCHGSG), 257–264 (CFACKGTG), 280–287 (CDSCGGTG), and 296–303 (CRSCMGSG). The tract at residues 455 to 528 (NDSTARRTQS…QNPKKDESSS (74 aa)) is disordered. The span at 462-488 (TQSSPSGTNSSTSTSSTSSKHSTGIST) shows a compositional bias: low complexity. Residues 513–528 (LHPDEDQNPKKDESSS) show a composition bias toward basic and acidic residues.

It is found in the mitochondrion. This is DnaJ homolog 1, mitochondrial (mdj1) from Schizosaccharomyces pombe (strain 972 / ATCC 24843) (Fission yeast).